A 265-amino-acid polypeptide reads, in one-letter code: tRNA (guanine-N(1)-)-methyltransferase (265 aa).

S-adenosyl-L-methionine-binding positions include glycine 119 and 139-144 (VGDYIL).

Belongs to the RNA methyltransferase TrmD family. As to quaternary structure, homodimer.

It is found in the cytoplasm. It catalyses the reaction guanosine(37) in tRNA + S-adenosyl-L-methionine = N(1)-methylguanosine(37) in tRNA + S-adenosyl-L-homocysteine + H(+). In terms of biological role, specifically methylates guanosine-37 in various tRNAs. In Pseudoalteromonas atlantica (strain T6c / ATCC BAA-1087), this protein is tRNA (guanine-N(1)-)-methyltransferase.